Consider the following 330-residue polypeptide: MKTAYIAKQRQISFVKSHFSRQLEEKLGLIEVQAPILSRVGDGTQDNLSGCEKAVQVKVKTLPDAQFEVVHSLAKWKRQTLGQHDFSAGEGLYTHMKALRPDEDRLTPIHSVYVDQWDWERVMGDEERHVGTLKATVEAIYAGIKATELAVSQEFGLTPFLPEQIHFVHSQELLSRYPELDAKGRERAIAKELGAVFLIGIGGKLADGKRHDVRAPDYDDWSTEVSEGFAGLNGDILVWNPVLEDAFEISSMGIRVDAEALKRQLALTGDEDRLKLEWHQALLRGEMPQTIGGGIGQSRLTMLLLQLDHIGQVQCGVWPAQVRESVSALL.

It belongs to the class-II aminoacyl-tRNA synthetase family. AsnA subfamily.

It is found in the cytoplasm. The catalysed reaction is L-aspartate + NH4(+) + ATP = L-asparagine + AMP + diphosphate + H(+). Its pathway is amino-acid biosynthesis; L-asparagine biosynthesis; L-asparagine from L-aspartate (ammonia route): step 1/1. The polypeptide is Aspartate--ammonia ligase (Klebsiella pneumoniae subsp. pneumoniae (strain ATCC 700721 / MGH 78578)).